We begin with the raw amino-acid sequence, 272 residues long: Cell division protein DivIB (272 aa).

The Cytoplasmic segment spans residues 1-21 (MRLSSHGKKTVSTSNNPVFNR). Residues 22–42 (IGLFFTAAILFALFLQMLFFL) traverse the membrane as a helical segment. The POTRA domain maps to 43–115 (RPWQDIKETK…GTAIIRVNEN (73 aa)). At 43–272 (RPWQDIKETK…SSSKSSNSSK (230 aa)) the chain is on the extracellular side. The disordered stretch occupies residues 253–272 (LSSLSSDKSKSSSKSSNSSK).

The protein belongs to the FtsQ/DivIB family. DivIB subfamily.

The protein resides in the cell membrane. Functionally, cell division protein that may be involved in stabilizing or promoting the assembly of the division complex. This is Cell division protein DivIB from Oenococcus oeni (strain ATCC BAA-331 / PSU-1).